We begin with the raw amino-acid sequence, 342 residues long: Trans-3-hydroxy-L-proline dehydratase (342 aa).

Residue Ser90 is the Proton acceptor of the active site. Residues 91–92, Asp252, and 257–258 each bind substrate; these read GS and GT.

Belongs to the proline racemase family.

It catalyses the reaction trans-3-hydroxy-L-proline = 1-pyrroline-2-carboxylate + H2O. Functionally, catalyzes the dehydration of trans-3-hydroxy-L-proline (t3LHyp) to Delta(1)-pyrroline-2-carboxylate (Pyr2C). Is likely involved in a degradation pathway that converts t3LHyp to L-proline. Displays neither proline racemase activity nor 4-hydroxyproline 2-epimerase activity. The polypeptide is Trans-3-hydroxy-L-proline dehydratase (Allorhizobium ampelinum (strain ATCC BAA-846 / DSM 112012 / S4) (Agrobacterium vitis (strain S4))).